Consider the following 508-residue polypeptide: Transcriptional regulatory protein moc3 (508 aa).

Residues 15–43 (NRTGSINSNPLYIPNPNVEPTPKPTKRRT) are disordered. The segment at residues 46-76 (GCLTCRRRRIKCDETKPFCLNCTKTNRECEG) is a DNA-binding region (zn(2)-C6 fungal-type). Disordered stretches follow at residues 110–146 (ASSSAQTGDTFSGSSQSNFNTNDLNQMTSSSNLSTVT) and 174–193 (NHNVPTNNSSSATSSTKPSV). Residues 176-193 (NVPTNNSSSATSSTKPSV) show a composition bias toward low complexity.

Interacts with zfs1.

It localises to the nucleus. In terms of biological role, induces sexual development and ascus formation. Also involved in calcium homeostasis. This chain is Transcriptional regulatory protein moc3 (moc3), found in Schizosaccharomyces pombe (strain 972 / ATCC 24843) (Fission yeast).